Consider the following 148-residue polypeptide: UPF0260 protein KPN78578_22800 (148 aa).

This sequence belongs to the UPF0260 family.

The protein is UPF0260 protein KPN78578_22800 of Klebsiella pneumoniae subsp. pneumoniae (strain ATCC 700721 / MGH 78578).